The primary structure comprises 495 residues: ATP synthase subunit beta, chloroplastic (495 aa).

ATP is bound at residue 172 to 179 (GGAGVGKT).

The protein belongs to the ATPase alpha/beta chains family. As to quaternary structure, F-type ATPases have 2 components, CF(1) - the catalytic core - and CF(0) - the membrane proton channel. CF(1) has five subunits: alpha(3), beta(3), gamma(1), delta(1), epsilon(1). CF(0) has four main subunits: a(1), b(1), b'(1) and c(9-12).

It is found in the plastid. The protein resides in the chloroplast thylakoid membrane. The enzyme catalyses ATP + H2O + 4 H(+)(in) = ADP + phosphate + 5 H(+)(out). In terms of biological role, produces ATP from ADP in the presence of a proton gradient across the membrane. The catalytic sites are hosted primarily by the beta subunits. This Eucomis bicolor (King's flower) protein is ATP synthase subunit beta, chloroplastic.